We begin with the raw amino-acid sequence, 294 residues long: uncharacterized protein (294 aa).

The protein belongs to the glycosyltransferase 2 family.

This is an uncharacterized protein from Haemophilus influenzae (strain ATCC 51907 / DSM 11121 / KW20 / Rd).